We begin with the raw amino-acid sequence, 713 residues long: P-loop NTPase domain-containing protein LPA1 homolog (713 aa).

Disordered regions lie at residues 218–249, 504–575, and 650–713; these read AKKRSGISTTSTIDFDKTRPLNDKPDGKPIGK, TSQA…EDLS, and LDSP…APDK. Over residues 231–246 the composition is skewed to basic and acidic residues; sequence DFDKTRPLNDKPDGKP. Residues 504-531 are compositionally biased toward polar residues; the sequence is TSQAGSVNESWDNANEGTGSHVPSSSGS. Over residues 533-544 the composition is skewed to basic and acidic residues; the sequence is KKLDGHCKEIKE. The span at 551–562 shows a compositional bias: acidic residues; sequence SDDDEEEEEEAA. Positions 656 to 668 are enriched in low complexity; the sequence is ARSSSALPISASS.

Required for the accumulation of phytic acid in seeds. Phytic acid is the primary storage form of phosphorus in cereal grains and other plant seeds. The chain is P-loop NTPase domain-containing protein LPA1 homolog from Oryza sativa subsp. japonica (Rice).